We begin with the raw amino-acid sequence, 630 residues long: Sorting nexin-4 (630 aa).

Polar residues-rich tracts occupy residues 1-11 (MSSEDQFTSIQ) and 19-28 (NTNNTPTDTT). The interval 1–143 (MSSEDQFTSI…QQPQQQLASI (143 aa)) is disordered. Basic residues predominate over residues 32–49 (KSSKSKKSKKSSSKKKNG). Low complexity predominate over residues 50–60 (NKISPSSTTET). Positions 81 to 94 (DDNHEVDDGNKEQN) are enriched in basic and acidic residues. Residues 130–143 (QQQLQQPQQQLASI) show a composition bias toward low complexity. The region spanning 187-321 (SIKTTVTHPN…HLFISNSNDW (135 aa)) is the PX domain. The a 1,2-diacyl-sn-glycero-3-phospho-(1D-myo-inositol-3-phosphate) site is built by Arg243, Lys269, and Arg288. Coiled-coil stretches lie at residues 361-413 (SKHK…SNQI) and 550-581 (TIKS…INEE).

This sequence belongs to the sorting nexin family.

Its subcellular location is the cytoplasm. The protein resides in the cytosol. It is found in the preautophagosomal structure membrane. It localises to the endosome membrane. Functionally, sorting nexin, involved in the separation or division of vacuoles throughout the entire life cycle of the cells. Involved in retrieval of late-Golgi SNAREs from post-Golgi endosomes to the trans-Golgi network, for cytoplasm to vacuole transport (Cvt), and autophagy of large cargos including mitophagy, pexophagy and glycophagy. In Candida albicans (strain SC5314 / ATCC MYA-2876) (Yeast), this protein is Sorting nexin-4 (SNX4).